The following is a 355-amino-acid chain: 3-isopropylmalate dehydrogenase (355 aa).

Substrate-binding residues include arginine 98, arginine 108, arginine 132, and aspartate 223. Residues aspartate 223, aspartate 247, and aspartate 251 each coordinate Mg(2+). 283–295 provides a ligand contact to NAD(+); that stretch reads GSAPDIAGQQKAD.

This sequence belongs to the isocitrate and isopropylmalate dehydrogenases family. LeuB type 2 subfamily. Homodimer. Requires Mg(2+) as cofactor. Mn(2+) serves as cofactor.

The protein resides in the cytoplasm. It catalyses the reaction (2R,3S)-3-isopropylmalate + NAD(+) = 4-methyl-2-oxopentanoate + CO2 + NADH. The protein operates within amino-acid biosynthesis; L-leucine biosynthesis; L-leucine from 3-methyl-2-oxobutanoate: step 3/4. Its function is as follows. Catalyzes the oxidation of 3-carboxy-2-hydroxy-4-methylpentanoate (3-isopropylmalate) to 3-carboxy-4-methyl-2-oxopentanoate. The product decarboxylates to 4-methyl-2 oxopentanoate. The protein is 3-isopropylmalate dehydrogenase of Clavibacter sepedonicus (Clavibacter michiganensis subsp. sepedonicus).